Reading from the N-terminus, the 115-residue chain is Toxin-like structure LSTX-R1 (115 aa).

An N-terminal signal peptide occupies residues 1–18 (MKLSLIIIATSLVIAVVA). Residues 19 to 51 (FPSKDSAATDFDKTESLENVEERVETALDERPR) constitute a propeptide that is removed on maturation.

This sequence belongs to the neurotoxin 25 family. F7 subfamily. Post-translationally, contains 4 disulfide bonds. Expressed by the venom gland.

Its subcellular location is the secreted. The polypeptide is Toxin-like structure LSTX-R1 (Lycosa singoriensis (Wolf spider)).